Here is a 288-residue protein sequence, read N- to C-terminus: Oxaloacetate decarboxylase (288 aa).

Residue Ser47 coordinates substrate. Asp85 serves as a coordination point for Mg(2+). The substrate site is built by Arg156 and His232.

Belongs to the isocitrate lyase/PEP mutase superfamily. Oxaloacetate decarboxylase family. In terms of assembly, homotetramer; dimer of dimers. The cofactor is Mg(2+).

The enzyme catalyses oxaloacetate + H(+) = pyruvate + CO2. Its function is as follows. Catalyzes the decarboxylation of oxaloacetate into pyruvate. Seems to play a role in maintaining cellular concentrations of bicarbonate and pyruvate. The sequence is that of Oxaloacetate decarboxylase from Bradyrhizobium sp. (strain ORS 278).